The chain runs to 230 residues: tRNA (guanine-N(7)-)-methyltransferase (230 aa).

S-adenosyl-L-methionine is bound by residues glutamate 61, glutamate 86, aspartate 113, and aspartate 135. The active site involves aspartate 135. Residues lysine 139, aspartate 171, and 209–212 (TRYE) each bind substrate.

This sequence belongs to the class I-like SAM-binding methyltransferase superfamily. TrmB family.

The enzyme catalyses guanosine(46) in tRNA + S-adenosyl-L-methionine = N(7)-methylguanosine(46) in tRNA + S-adenosyl-L-homocysteine. The protein operates within tRNA modification; N(7)-methylguanine-tRNA biosynthesis. Catalyzes the formation of N(7)-methylguanine at position 46 (m7G46) in tRNA. The chain is tRNA (guanine-N(7)-)-methyltransferase from Rhizobium etli (strain ATCC 51251 / DSM 11541 / JCM 21823 / NBRC 15573 / CFN 42).